Reading from the N-terminus, the 444-residue chain is Acetyl-CoA--deacetylcephalosporin C acetyltransferase (444 aa).

Positions 1-71 (MLPSAQVARL…PQIANRFEAS (71 aa)) are excised as a propeptide. Residues 112–425 (VIVCHTLTSS…DTNEGHDFFV (314 aa)) enclose the AB hydrolase-1 domain. Residues Ser208 and His421 contribute to the active site.

It belongs to the AB hydrolase superfamily. MetX family. In terms of assembly, heterodimer of chain I and chain II.

The catalysed reaction is deacetylcephalosporin C + acetyl-CoA = cephalosporin C + CoA. It participates in antibiotic biosynthesis; cephalosporin C biosynthesis. In terms of biological role, catalyzes the conversion of deacetylcephalosporin C to cephalosporin C. This is Acetyl-CoA--deacetylcephalosporin C acetyltransferase (CEFG) from Hapsidospora chrysogena (Acremonium chrysogenum).